Consider the following 185-residue polypeptide: ATP-dependent protease subunit HslV (185 aa).

Residue T12 is part of the active site. Residues A168, C171, and T174 each contribute to the Na(+) site.

This sequence belongs to the peptidase T1B family. HslV subfamily. A double ring-shaped homohexamer of HslV is capped on each side by a ring-shaped HslU homohexamer. The assembly of the HslU/HslV complex is dependent on binding of ATP.

The protein localises to the cytoplasm. It carries out the reaction ATP-dependent cleavage of peptide bonds with broad specificity.. Allosterically activated by HslU binding. Protease subunit of a proteasome-like degradation complex believed to be a general protein degrading machinery. This Cereibacter sphaeroides (strain KD131 / KCTC 12085) (Rhodobacter sphaeroides) protein is ATP-dependent protease subunit HslV.